The chain runs to 187 residues: Adenylate kinase (187 aa).

Gly-12 to Thr-17 contacts ATP. An NMP region spans residues Ser-32 to Val-61. Residues Thr-33, Arg-38, Asp-59–Val-61, Gly-87–Arg-90, and Gln-94 contribute to the AMP site. The segment at Gly-128–Asp-134 is LID. Residue Arg-129 participates in ATP binding. Positions 131 and 142 each coordinate AMP. Arg-170 provides a ligand contact to ATP.

It belongs to the adenylate kinase family. In terms of assembly, monomer.

The protein localises to the cytoplasm. The catalysed reaction is AMP + ATP = 2 ADP. It functions in the pathway purine metabolism; AMP biosynthesis via salvage pathway; AMP from ADP: step 1/1. Its function is as follows. Catalyzes the reversible transfer of the terminal phosphate group between ATP and AMP. Plays an important role in cellular energy homeostasis and in adenine nucleotide metabolism. The protein is Adenylate kinase of Leuconostoc mesenteroides subsp. mesenteroides (strain ATCC 8293 / DSM 20343 / BCRC 11652 / CCM 1803 / JCM 6124 / NCDO 523 / NBRC 100496 / NCIMB 8023 / NCTC 12954 / NRRL B-1118 / 37Y).